Reading from the N-terminus, the 26-residue chain is Bifunctional protein PutA (26 aa).

The segment at 1–26 (MGTTTMGVKLDDATRERIKSAASRID) is disordered. Basic and acidic residues predominate over residues 9 to 26 (KLDDATRERIKSAASRID).

FAD serves as cofactor.

It carries out the reaction L-proline + a quinone = (S)-1-pyrroline-5-carboxylate + a quinol + H(+). The enzyme catalyses L-glutamate 5-semialdehyde + NAD(+) + H2O = L-glutamate + NADH + 2 H(+). Its pathway is amino-acid degradation; L-proline degradation into L-glutamate; L-glutamate from L-proline: step 1/2. The protein operates within amino-acid degradation; L-proline degradation into L-glutamate; L-glutamate from L-proline: step 2/2. Functionally, oxidizes proline to glutamate for use as a carbon and nitrogen source and also function as a transcriptional repressor of the put operon. The polypeptide is Bifunctional protein PutA (putA) (Klebsiella pneumoniae).